The following is a 261-amino-acid chain: Homeobox-leucine zipper protein HOX24 (261 aa).

Disordered regions lie at residues 42–67 (AAAAGRGGGDGDGGGGGGGGGERKRR) and 160–188 (KLNERQDQSGSCDGGGAEGDDDDKRNSVM). The segment covering 46 to 61 (GRGGGDGDGGGGGGGG) has biased composition (gly residues). Residues 61–121 (GGERKRRFTE…NKRARWRSKQ (61 aa)) constitute a DNA-binding region (homeobox). The leucine-zipper stretch occupies residues 120 to 164 (KQIEHDYAALRAQYDALHARVESLRQEKLALADQVDELRGKLNER).

The protein belongs to the HD-ZIP homeobox family. Class I subfamily. As to expression, expressed in roots and panicles.

It localises to the nucleus. Its function is as follows. Probable transcription factor. The polypeptide is Homeobox-leucine zipper protein HOX24 (HOX24) (Oryza sativa subsp. japonica (Rice)).